Here is a 470-residue protein sequence, read N- to C-terminus: ATP synthase subunit beta (470 aa).

157 to 164 (GGAGVGKT) contacts ATP.

The protein belongs to the ATPase alpha/beta chains family. As to quaternary structure, F-type ATPases have 2 components, CF(1) - the catalytic core - and CF(0) - the membrane proton channel. CF(1) has five subunits: alpha(3), beta(3), gamma(1), delta(1), epsilon(1). CF(0) has three main subunits: a(1), b(2) and c(9-12). The alpha and beta chains form an alternating ring which encloses part of the gamma chain. CF(1) is attached to CF(0) by a central stalk formed by the gamma and epsilon chains, while a peripheral stalk is formed by the delta and b chains.

The protein localises to the cell inner membrane. It carries out the reaction ATP + H2O + 4 H(+)(in) = ADP + phosphate + 5 H(+)(out). Its function is as follows. Produces ATP from ADP in the presence of a proton gradient across the membrane. The catalytic sites are hosted primarily by the beta subunits. The polypeptide is ATP synthase subunit beta (Geobacter sp. (strain M21)).